The chain runs to 169 residues: MNNLTLSLHRERRLLVLLGLVCLALLAGALYLQYVKNEDPCPLCIIQRYFFVLIAVFAFIGAGMASGAGIAVIEALIVLSAAAGVGTAARHLYVQLNPGFSCGFDALQPVVDSLPPAHWLPGVFKVAGLCETVYPPIFGILLPGWALIAFALIVVPVAASLLRHRGRLR.

Residues 1 to 14 (MNNLTLSLHRERRL) are Cytoplasmic-facing. A helical transmembrane segment spans residues 15–31 (LVLLGLVCLALLAGALY). The Periplasmic portion of the chain corresponds to 32–49 (LQYVKNEDPCPLCIIQRY). Cysteines 41 and 44 form a disulfide. The chain crosses the membrane as a helical span at residues 50–64 (FFVLIAVFAFIGAGM). Over 65 to 71 (ASGAGIA) the chain is Cytoplasmic. Residues 72–89 (VIEALIVLSAAAGVGTAA) form a helical membrane-spanning segment. At 90–144 (RHLYVQLNPGFSCGFDALQPVVDSLPPAHWLPGVFKVAGLCETVYPPIFGILLPG) the chain is on the periplasmic side. C102 and C130 are joined by a disulfide. A helical membrane pass occupies residues 145–163 (WALIAFALIVVPVAASLLR). Residues 164–169 (HRGRLR) lie on the Cytoplasmic side of the membrane.

This sequence belongs to the DsbB family.

Its subcellular location is the cell inner membrane. Functionally, required for disulfide bond formation in some periplasmic proteins. Acts by oxidizing the DsbA protein. This chain is Disulfide bond formation protein B, found in Burkholderia thailandensis (strain ATCC 700388 / DSM 13276 / CCUG 48851 / CIP 106301 / E264).